We begin with the raw amino-acid sequence, 221 residues long: Transcription factor bHLH126 (221 aa).

Disordered stretches follow at residues 1–46 (MDPY…KKLL) and 104–132 (RRDE…VGKS). The 53-residue stretch at 42-94 (KKKLLHRDIERQRRQEMATLFATLRTHLPLKYIKGKRAVSDHVNGAVNFIKDT) folds into the bHLH domain.

As to quaternary structure, homodimer.

It is found in the nucleus. This chain is Transcription factor bHLH126 (BHLH126), found in Arabidopsis thaliana (Mouse-ear cress).